The sequence spans 104 residues: Large ribosomal subunit protein bL21 (104 aa).

Belongs to the bacterial ribosomal protein bL21 family. In terms of assembly, part of the 50S ribosomal subunit. Contacts protein L20.

Its function is as follows. This protein binds to 23S rRNA in the presence of protein L20. This chain is Large ribosomal subunit protein bL21, found in Helicobacter pylori (strain Shi470).